A 70-amino-acid chain; its full sequence is Putative membrane protein insertion efficiency factor (70 aa).

It belongs to the UPF0161 family.

The protein localises to the cell membrane. Could be involved in insertion of integral membrane proteins into the membrane. The protein is Putative membrane protein insertion efficiency factor of Symbiobacterium thermophilum (strain DSM 24528 / JCM 14929 / IAM 14863 / T).